Here is a 214-residue protein sequence, read N- to C-terminus: uncharacterized protein (214 aa).

The N-terminal stretch at 1 to 17 (MLKKIIILFLGVFVLSG) is a signal peptide. Cys18 carries N-palmitoyl cysteine lipidation. Residue Cys18 is the site of S-diacylglycerol cysteine attachment. Over residues 64–77 (DNLDDPEDDDDDYD) the composition is skewed to acidic residues. 3 disordered regions span residues 64 to 83 (DNLD…LRGE), 106 to 138 (YKAE…KERK), and 166 to 197 (TANQ…SKVK). Positions 120–162 (TLSKANKKVRKDNTDKERKMQEELDQIKAMLRETKRDISKYTC) form a coiled coil.

Its subcellular location is the cell membrane. This is an uncharacterized protein from Rickettsia bellii (strain RML369-C).